Consider the following 72-residue polypeptide: Large ribosomal subunit protein bL31 (72 aa).

Residues C16, C18, C37, and C40 each coordinate Zn(2+).

Belongs to the bacterial ribosomal protein bL31 family. Type A subfamily. As to quaternary structure, part of the 50S ribosomal subunit. Requires Zn(2+) as cofactor.

In terms of biological role, binds the 23S rRNA. This chain is Large ribosomal subunit protein bL31, found in Idiomarina loihiensis (strain ATCC BAA-735 / DSM 15497 / L2-TR).